A 262-amino-acid chain; its full sequence is Large ribosomal subunit protein uL10m (262 aa).

A mitochondrion-targeting transit peptide spans M1–H28. A disordered region spans residues G243–A262.

The protein belongs to the universal ribosomal protein uL10 family. In terms of assembly, component of the mitochondrial ribosome large subunit (39S) which comprises a 16S rRNA and about 50 distinct proteins.

It localises to the mitochondrion. This chain is Large ribosomal subunit protein uL10m (Mrpl10), found in Mus musculus (Mouse).